Consider the following 363-residue polypeptide: Chorismate synthase (363 aa).

The NADP(+) site is built by arginine 48 and arginine 54. Residues 125 to 127 (RSS), 237 to 238 (NA), glycine 277, 292 to 296 (KPTSS), and arginine 318 contribute to the FMN site.

Belongs to the chorismate synthase family. Homotetramer. FMNH2 serves as cofactor.

The catalysed reaction is 5-O-(1-carboxyvinyl)-3-phosphoshikimate = chorismate + phosphate. The protein operates within metabolic intermediate biosynthesis; chorismate biosynthesis; chorismate from D-erythrose 4-phosphate and phosphoenolpyruvate: step 7/7. Functionally, catalyzes the anti-1,4-elimination of the C-3 phosphate and the C-6 proR hydrogen from 5-enolpyruvylshikimate-3-phosphate (EPSP) to yield chorismate, which is the branch point compound that serves as the starting substrate for the three terminal pathways of aromatic amino acid biosynthesis. This reaction introduces a second double bond into the aromatic ring system. This Pseudomonas putida (strain ATCC 700007 / DSM 6899 / JCM 31910 / BCRC 17059 / LMG 24140 / F1) protein is Chorismate synthase.